We begin with the raw amino-acid sequence, 158 residues long: ATP synthase subunit b', chloroplastic (158 aa).

The chain crosses the membrane as a helical span at residues 21-41 (GTLPLMALQFLILMLLLNTIF).

It belongs to the ATPase B chain family. F-type ATPases have 2 components, F(1) - the catalytic core - and F(0) - the membrane proton channel. F(1) has five subunits: alpha(3), beta(3), gamma(1), delta(1), epsilon(1). F(0) has four main subunits: a(1), b(1), b'(1) and c(10-14). The alpha and beta chains form an alternating ring which encloses part of the gamma chain. F(1) is attached to F(0) by a central stalk formed by the gamma and epsilon chains, while a peripheral stalk is formed by the delta, b and b' chains.

Its subcellular location is the plastid. It localises to the chloroplast thylakoid membrane. F(1)F(0) ATP synthase produces ATP from ADP in the presence of a proton or sodium gradient. F-type ATPases consist of two structural domains, F(1) containing the extramembraneous catalytic core and F(0) containing the membrane proton channel, linked together by a central stalk and a peripheral stalk. During catalysis, ATP synthesis in the catalytic domain of F(1) is coupled via a rotary mechanism of the central stalk subunits to proton translocation. Functionally, component of the F(0) channel, it forms part of the peripheral stalk, linking F(1) to F(0). The b'-subunit is a diverged and duplicated form of b found in plants and photosynthetic bacteria. The polypeptide is ATP synthase subunit b', chloroplastic (Porphyra purpurea (Red seaweed)).